The sequence spans 130 residues: Snaclec B8 (130 aa).

Intrachain disulfides connect Cys2-Cys13, Cys30-Cys124, and Cys99-Cys116. In terms of domain architecture, C-type lectin spans 9 to 125 (HEGHCYKVFK…CELAYHFICM (117 aa)).

It belongs to the snaclec family. As to quaternary structure, heterodimer; disulfide-linked. As to expression, expressed by the venom gland.

It is found in the secreted. Functionally, interferes with one step of hemostasis (modulation of platelet aggregation, or coagulation cascade, for example). The chain is Snaclec B8 from Macrovipera lebetinus (Levantine viper).